Consider the following 354-residue polypeptide: NAD-dependent epimerase/dehydratase ALT6 (354 aa).

Positions 41 and 174 each coordinate NADP(+).

This sequence belongs to the NAD(P)-dependent epimerase/dehydratase family. Dihydroflavonol-4-reductase subfamily.

Its pathway is mycotoxin biosynthesis. Functionally, NAD-dependent epimerase/dehydratase; part of the gene cluster that mediates the biosynthesis of the host-selective toxins (HSTs) AAL-toxins, sphinganine-analog mycotoxins responsible for Alternaria stem canker on tomato by the tomato pathotype. The biosynthesis starts with the polyketide synthase ALT1-catalyzed C-16 carbon chain assembly from one starter acetyl-CoA unit with malonyl-CoA extender units. ALT1 also selectively transfers methyl groups at the first and the third cycle of chain elongation for AAL toxin. The C-16 polyketide chain is released from the enzyme by a nucleophilic attack of a carbanion, which is derived from R-carbon of glycin by decarboxylation, on the carbonyl carbon of polyketide acyl chain. This step is probably catalyzed by a pyridoxal 5'-phosphate-dependent aminoacyl transferase ALT4. The respective functions of the other enzymes encoded by the cluster have still to be elucidated. The sphingosine N-acyltransferase-like protein ALT7 seems not to act as a resistance/self-tolerance factor against the toxin in the toxin biosynthetic gene cluster, contrary to what is expected. This Alternaria alternata (Alternaria rot fungus) protein is NAD-dependent epimerase/dehydratase ALT6.